Consider the following 197-residue polypeptide: Holliday junction branch migration complex subunit RuvA (197 aa).

A domain I region spans residues Met1 to Arg63. Residues Ser64–Ile142 are domain II. Positions Ala143–Ser147 are flexible linker. The segment at Ala148–Lys197 is domain III.

The protein belongs to the RuvA family. Homotetramer. Forms an RuvA(8)-RuvB(12)-Holliday junction (HJ) complex. HJ DNA is sandwiched between 2 RuvA tetramers; dsDNA enters through RuvA and exits via RuvB. An RuvB hexamer assembles on each DNA strand where it exits the tetramer. Each RuvB hexamer is contacted by two RuvA subunits (via domain III) on 2 adjacent RuvB subunits; this complex drives branch migration. In the full resolvosome a probable DNA-RuvA(4)-RuvB(12)-RuvC(2) complex forms which resolves the HJ.

It is found in the cytoplasm. In terms of biological role, the RuvA-RuvB-RuvC complex processes Holliday junction (HJ) DNA during genetic recombination and DNA repair, while the RuvA-RuvB complex plays an important role in the rescue of blocked DNA replication forks via replication fork reversal (RFR). RuvA specifically binds to HJ cruciform DNA, conferring on it an open structure. The RuvB hexamer acts as an ATP-dependent pump, pulling dsDNA into and through the RuvAB complex. HJ branch migration allows RuvC to scan DNA until it finds its consensus sequence, where it cleaves and resolves the cruciform DNA. The sequence is that of Holliday junction branch migration complex subunit RuvA from Streptococcus pneumoniae (strain Taiwan19F-14).